The sequence spans 83 residues: Putative membrane protein insertion efficiency factor (83 aa).

The tract at residues 62–83 is disordered; the sequence is KGGYDPVPPKSVKSAGNSKDSK.

It belongs to the UPF0161 family.

The protein localises to the cell inner membrane. Functionally, could be involved in insertion of integral membrane proteins into the membrane. This chain is Putative membrane protein insertion efficiency factor, found in Chlorobaculum tepidum (strain ATCC 49652 / DSM 12025 / NBRC 103806 / TLS) (Chlorobium tepidum).